The sequence spans 361 residues: Histidinol-phosphate aminotransferase (361 aa).

K219 carries the N6-(pyridoxal phosphate)lysine modification.

The protein belongs to the class-II pyridoxal-phosphate-dependent aminotransferase family. Histidinol-phosphate aminotransferase subfamily. In terms of assembly, homodimer. It depends on pyridoxal 5'-phosphate as a cofactor.

It catalyses the reaction L-histidinol phosphate + 2-oxoglutarate = 3-(imidazol-4-yl)-2-oxopropyl phosphate + L-glutamate. Its pathway is amino-acid biosynthesis; L-histidine biosynthesis; L-histidine from 5-phospho-alpha-D-ribose 1-diphosphate: step 7/9. The polypeptide is Histidinol-phosphate aminotransferase (Acinetobacter baumannii (strain AB307-0294)).